Here is a 348-residue protein sequence, read N- to C-terminus: MAIVSSNAGSSAPRREPVLDAQPLPEESSGRPDDGLRPKRLDDYIGQDELKQVLGIAVQAALGRGDALDHVLLYGPPGLGKTTMALVLAEELGVTCRITSAPALERPRDIVGLLVNVQPRDLLFIDEIHRLNRVSEELLYPAMEDRRLDLTVGKGSTARTRSLELPPFTLVGATTKAGSLSSPLRDRFGLIQRLEFYGQEDLEAIVSRTADLLGVSLSAGACRRIAGCCRGTPRIANRLLRRVRDVACVQGRQNQIDEGLVSQALSLHRVDHRGLDAGDRRLLAQLDQHHDGGPVGLETLAAALGEDPTTLESVVEPFLLQQGLLVRTPRGRMLTEAARAHLREQEVA.

The segment covering 1-10 (MAIVSSNAGS) has biased composition (polar residues). Residues 1–41 (MAIVSSNAGSSAPRREPVLDAQPLPEESSGRPDDGLRPKRL) form a disordered region. Residues 13-197 (PRREPVLDAQ…FGLIQRLEFY (185 aa)) form a large ATPase domain (RuvB-L) region. Positions 28–41 (SSGRPDDGLRPKRL) are enriched in basic and acidic residues. ATP-binding residues include leucine 36, arginine 37, glycine 78, lysine 81, threonine 82, threonine 83, arginine 187, tyrosine 197, and arginine 234. Mg(2+) is bound at residue threonine 82. A small ATPAse domain (RuvB-S) region spans residues 198-269 (GQEDLEAIVS…LVSQALSLHR (72 aa)). Residues 272–348 (HRGLDAGDRR…RAHLREQEVA (77 aa)) form a head domain (RuvB-H) region. DNA-binding residues include arginine 327 and arginine 332.

It belongs to the RuvB family. In terms of assembly, homohexamer. Forms an RuvA(8)-RuvB(12)-Holliday junction (HJ) complex. HJ DNA is sandwiched between 2 RuvA tetramers; dsDNA enters through RuvA and exits via RuvB. An RuvB hexamer assembles on each DNA strand where it exits the tetramer. Each RuvB hexamer is contacted by two RuvA subunits (via domain III) on 2 adjacent RuvB subunits; this complex drives branch migration. In the full resolvosome a probable DNA-RuvA(4)-RuvB(12)-RuvC(2) complex forms which resolves the HJ.

It localises to the cytoplasm. It carries out the reaction ATP + H2O = ADP + phosphate + H(+). The RuvA-RuvB-RuvC complex processes Holliday junction (HJ) DNA during genetic recombination and DNA repair, while the RuvA-RuvB complex plays an important role in the rescue of blocked DNA replication forks via replication fork reversal (RFR). RuvA specifically binds to HJ cruciform DNA, conferring on it an open structure. The RuvB hexamer acts as an ATP-dependent pump, pulling dsDNA into and through the RuvAB complex. RuvB forms 2 homohexamers on either side of HJ DNA bound by 1 or 2 RuvA tetramers; 4 subunits per hexamer contact DNA at a time. Coordinated motions by a converter formed by DNA-disengaged RuvB subunits stimulates ATP hydrolysis and nucleotide exchange. Immobilization of the converter enables RuvB to convert the ATP-contained energy into a lever motion, pulling 2 nucleotides of DNA out of the RuvA tetramer per ATP hydrolyzed, thus driving DNA branch migration. The RuvB motors rotate together with the DNA substrate, which together with the progressing nucleotide cycle form the mechanistic basis for DNA recombination by continuous HJ branch migration. Branch migration allows RuvC to scan DNA until it finds its consensus sequence, where it cleaves and resolves cruciform DNA. The chain is Holliday junction branch migration complex subunit RuvB from Parasynechococcus marenigrum (strain WH8102).